The following is a 336-amino-acid chain: MTINRSRQPEDHEVARCRWLEPFLSHLQAARNVSPKTVTAYRCDLLQYFSFLKEQAGLDRLEAVEPERVEVADVRLFMGHLLDKGIQPRSIARKLASVKSFYRFLLETGRISSSPLSLVVTPRLDKKVPRFVSEEEARQLFRRFESQEDNAALQGDGKKAEVRQFETFRDRAVLEVLYGCGLRLSELIALERADVDLVHGFLKVTGKGRKQRIVPLGEPAVEALRKYFEVRRNFFRIPLERTGESSRVFVTSRGRQLYPMLVQRMTKRYLTPVSESEKKNPHILRHSFATHMLNGGADLKSVSEMLGHSSLTTTELYTHVTFSRLKEIYDKAHPGA.

The region spanning 14–106 (VARCRWLEPF…SVKSFYRFLL (93 aa)) is the Core-binding (CB) domain. Positions 127-330 (KVPRFVSEEE…TFSRLKEIYD (204 aa)) constitute a Tyr recombinase domain. Active-site residues include arginine 183, lysine 207, histidine 282, arginine 285, and histidine 308. The active-site O-(3'-phospho-DNA)-tyrosine intermediate is the tyrosine 317.

Belongs to the 'phage' integrase family. XerC subfamily. As to quaternary structure, forms a cyclic heterotetrameric complex composed of two molecules of XerC and two molecules of XerD.

It localises to the cytoplasm. Site-specific tyrosine recombinase, which acts by catalyzing the cutting and rejoining of the recombining DNA molecules. The XerC-XerD complex is essential to convert dimers of the bacterial chromosome into monomers to permit their segregation at cell division. It also contributes to the segregational stability of plasmids. The polypeptide is Tyrosine recombinase XerC (Chlorobaculum parvum (strain DSM 263 / NCIMB 8327) (Chlorobium vibrioforme subsp. thiosulfatophilum)).